We begin with the raw amino-acid sequence, 505 residues long: MNAPKPVVLCILDGWGLSDDKTANAPYLAKTPTFDAIMTKGPHARLITHGPDVGLPSGQMGNSEVGHTNIGAGRVVAMDLGQIDLAIEDGSFFDNAALRDFIARTRAAGGTAHLMGLVSDGGVHGHLNHIIAAAQAITNAGVPVVMHAITDGRDVAPKSAYGFMAELEDRLPKGARIVTVTGRYFALDRDNRWERVQEAYDAMVRGEGRRVSTAHSAIDYAYNQSESDEFITASVLTGYDGMRDGDSLFCLNFRADRAREILRAIGEPGFADFDTGARPALSALLGMVEYSDAHNAYMTTVFPKRDIVNTLGAWVARHGLRQFRLAETEKYPHVTFFLNGGKEEAEPGEDRFMPKSPKVATYDMQPEMSAPEVTDKFVEAIGAGYDLIVTNYANPDMVGHTGDLKAAIKACEAVDQGLSRVIAALEQAGGAMIVTADHGNCEMMIDPETGGPHTAHTLNPVPVALVGGPAGVTLRDGRLSDLAPTVLALMGLPKPPEMTGESLIT.

Mn(2+)-binding residues include Asp-13 and Ser-63. Ser-63 serves as the catalytic Phosphoserine intermediate. Substrate is bound by residues His-124, 153–154, Arg-183, Arg-189, 254–257, and Lys-330; these read RD and RADR. Asp-396, His-400, Asp-437, His-438, and His-456 together coordinate Mn(2+).

Belongs to the BPG-independent phosphoglycerate mutase family. As to quaternary structure, monomer. It depends on Mn(2+) as a cofactor.

It catalyses the reaction (2R)-2-phosphoglycerate = (2R)-3-phosphoglycerate. It participates in carbohydrate degradation; glycolysis; pyruvate from D-glyceraldehyde 3-phosphate: step 3/5. Its function is as follows. Catalyzes the interconversion of 2-phosphoglycerate and 3-phosphoglycerate. The sequence is that of 2,3-bisphosphoglycerate-independent phosphoglycerate mutase from Ruegeria pomeroyi (strain ATCC 700808 / DSM 15171 / DSS-3) (Silicibacter pomeroyi).